The chain runs to 194 residues: Fibroblast growth factor 7 (194 aa).

Residues 1–31 form the signal peptide; sequence MRKWILTWILPSLLYRSCFHIICLVGTISLA. N-linked (GlcNAc...) asparagine glycosylation occurs at Asn45.

Belongs to the heparin-binding growth factors family. In terms of assembly, interacts with FGFBP1. Interacts with FGFR2. Affinity between fibroblast growth factors (FGFs) and their receptors is increased by heparan sulfate glycosaminoglycans that function as coreceptors.

Functionally, plays an important role in the regulation of embryonic development, cell proliferation and cell differentiation. Required for normal branching morphogenesis. Growth factor active on keratinocytes. Possible major paracrine effector of normal epithelial cell proliferation. This chain is Fibroblast growth factor 7 (FGF7), found in Ovis aries (Sheep).